A 352-amino-acid polypeptide reads, in one-letter code: Neutral protease 2 (352 aa).

An N-terminal signal peptide occupies residues 1–19 (MRVTTLSTALFALASTAVS). Positions 20–175 (APTAGSSSPG…TKALSQLTRR (156 aa)) are excised as a propeptide. Cystine bridges form between Cys181/Cys253, Cys260/Cys278, and Cys292/Cys352. A Zn(2+)-binding site is contributed by His303. Glu304 is a catalytic residue. Residues His307 and Asp318 each contribute to the Zn(2+) site.

This sequence belongs to the peptidase M35 family. Zn(2+) serves as cofactor.

The catalysed reaction is Preferential cleavage of bonds with hydrophobic residues in P1'. Also 3-Asn-|-Gln-4 and 8-Gly-|-Ser-9 bonds in insulin B chain.. Metalloprotease that shows high activities on basic nuclear substrates such as histone and protamine. In Aspergillus oryzae (strain ATCC 42149 / RIB 40) (Yellow koji mold), this protein is Neutral protease 2.